The sequence spans 596 residues: F-box/WD repeat-containing protein 8 (596 aa).

N-acetylmethionine is present on M1. Residues 21-95 are disordered; sequence QVLRRRRRLE…PDRDAAEPEP (75 aa). The span at 29–43 shows a compositional bias: basic and acidic residues; it reads LEAGERRPRRPEAGA. The segment covering 44–64 has biased composition (low complexity); sequence RGEPASGYLGLAQGLLEGAGR. Over residues 71–91 the composition is skewed to basic and acidic residues; it reads GRTDRKDVSSRSRSPPDRDAA. Residues S82 and S84 each carry the phosphoserine modification. Residues 111–157 form the F-box domain; the sequence is PFFDVHLPYELAINIFQYLNRRELGLCAQVSKTWKVIAEDEVLWYRL. WD repeat units lie at residues 199–248, 257–297, 298–338, 339–381, 382–427, 428–473, 474–511, and 512–559; these read AVSE…LESE, QPYV…FEHD, ARIQ…SEFE, VQKL…LHYV, YGQP…SKLG, NALG…SAHQ, LGVSAVQMDDWKIVSGGEEGLVSVWDYRMNQKLWEVHS, and RHPV…AYEF.

In terms of assembly, component of the Cul7-RING(FBXW8) complex consisting of CUL7, RBX1, SKP1 and FBXW8; within the complex interacts with CUL7 and SKP1. Interacts with GLMN isoform 1. Interacts with OBSL1, CUL1, CUL2, CCT6B, PFDN5, CCT2, CCT3, CCT6A, CCT7, VBP1, CCDC8, ARF1, TRIP13, PDCD5 and GORASP1. Interacts with MAP4K1/HPK1 (when autophosphorylated). Associated component of the 3M complex. Interacts with POUF51 (when phosphorylated on 'Ser-347'). Phosphorylation at Ser-84 by mTORC2 promotes FBXW8 stabilization, allowing its translocation to the cytosol in response to insulin. As to expression, expressed in placenta and embryonic brain (at protein level).

The protein localises to the cytoplasm. It is found in the perinuclear region. The protein resides in the golgi apparatus. It localises to the cytosol. It participates in protein modification; protein ubiquitination. Functionally, substrate-recognition component of the Cul7-RING(FBXW8) ubiquitin ligase complex, which mediates the ubiquitination and subsequent proteasomal degradation of target proteins. The Cul7-RING(FBXW8) complex mediates ubiquitination and consequent degradation of GORASP1, acting as a component of the ubiquitin ligase pathway that regulates Golgi morphogenesis and dendrite patterning in brain. Mediates ubiquitination and degradation of IRS1 in a mTOR-dependent manner: the Cul7-RING(FBXW8) complex recognizes and binds IRS1 previously phosphorylated by S6 kinase (RPS6KB1 or RPS6KB2). The Cul7-RING(FBXW8) complex also mediates ubiquitination of MAP4K1/HPK1: recognizes and binds autophosphorylated MAP4K1/HPK1, leading to its degradation, thereby affecting cell proliferation and differentiation. The Cul7-RING(FBXW8) complex also mediates ubiquitination of phosphorylated cyclin-D1 (CCND1). The Cul7-RING(FBXW8) complex is however not a major regulator of CCND1 stability during the G1/S transition. Associated component of the 3M complex, suggesting that it mediates some of 3M complex functions. This is F-box/WD repeat-containing protein 8 (Fbxw8) from Rattus norvegicus (Rat).